The following is a 636-amino-acid chain: Transcription termination factor FttA (636 aa).

The interval 4–72 (ELELKRIRDE…VVFRWNVDKR (69 aa)) is KHa. The segment at 73–140 (KDPAETKDYI…WQPKTIRTPP (68 aa)) is KHb. A metallo-beta-lactamase N-terminus region spans residues 181–383 (NIRMNALGGF…LLIEATYGGP (203 aa)). Zn(2+) contacts are provided by His242, His244, Asp246, His247, His329, and Asp352. The beta-Casp stretch occupies residues 384-577 (QDRIPSRQES…LKVFTLEGFS (194 aa)). Positions 578 to 636 (GHSSRSQISQFLRRIQPRPKVVIVNHGEESKCVSLSTMIHKKLRKSTKSPKNLEVVLLK) are metallo-beta-lactamase C-terminus. His603 is a Zn(2+) binding site.

Belongs to the metallo-beta-lactamase superfamily. RNA-metabolizing metallo-beta-lactamase-like family. FttA subfamily. Homodimer. Interacts with RNA polymerase (RNAP), interacts with the Spt4-Spt5 complex. Zn(2+) is required as a cofactor.

Its function is as follows. Terminates transcription on the whole genome. Termination is linked to FttA-mediated RNA cleavage and does not require NTP hydrolysis. Cleaves endonucleolytically at the RNA exit channel of RNA polymerase (RNAP); the 5'-3' exonuclease activity of this protein degrades the nascent RNA released from RNAP. In terms of biological role, terminates transcription genome-wide in M.maripaludis. Restores wild-type growth to a strain of Methanococcus maripaludis depleted for this gene at 22 degrees Celsius and prevents transcriptional read-through. Transcription termination is most effective in vivo on RNAs with more than one U4-tract in their 3'-ends. Has endonuclease activity after U-rich tracts in transcription termination sequences. In Lokiarchaeum sp. (strain GC14_75), this protein is Transcription termination factor FttA.